A 213-amino-acid polypeptide reads, in one-letter code: uncharacterized protein (213 aa).

This is an uncharacterized protein from Aquifex aeolicus (strain VF5).